A 166-amino-acid polypeptide reads, in one-letter code: NADPH-dependent 7-cyano-7-deazaguanine reductase (166 aa).

Cys-57 functions as the Thioimide intermediate in the catalytic mechanism. The active-site Proton donor is the Asp-64. Substrate-binding positions include Val-79–Ser-81 and His-98–Glu-99.

Belongs to the GTP cyclohydrolase I family. QueF type 1 subfamily.

The protein resides in the cytoplasm. It catalyses the reaction 7-aminomethyl-7-carbaguanine + 2 NADP(+) = 7-cyano-7-deazaguanine + 2 NADPH + 3 H(+). The protein operates within tRNA modification; tRNA-queuosine biosynthesis. Catalyzes the NADPH-dependent reduction of 7-cyano-7-deazaguanine (preQ0) to 7-aminomethyl-7-deazaguanine (preQ1). This is NADPH-dependent 7-cyano-7-deazaguanine reductase from Staphylococcus haemolyticus (strain JCSC1435).